A 264-amino-acid polypeptide reads, in one-letter code: ATP synthase subunit a (264 aa).

Helical transmembrane passes span 32–52 (IDSLFFSVGLGVLFLWLFHSV), 89–109 (VIAPLALTIFVWVFMMNFMDM), 134–154 (DLNITFSMAIGVFLLIIYYSI), 177–197 (IPVNFLLETVTLIAKPISLAL), 208–228 (LIFILIALMYGANWALSTLGV), and 235–255 (LIFHILVITLQAFIFMMLTIV).

This sequence belongs to the ATPase A chain family. As to quaternary structure, F-type ATPases have 2 components, CF(1) - the catalytic core - and CF(0) - the membrane proton channel. CF(1) has five subunits: alpha(3), beta(3), gamma(1), delta(1), epsilon(1). CF(0) has three main subunits: a(1), b(2) and c(9-12). The alpha and beta chains form an alternating ring which encloses part of the gamma chain. CF(1) is attached to CF(0) by a central stalk formed by the gamma and epsilon chains, while a peripheral stalk is formed by the delta and b chains.

The protein resides in the cell inner membrane. Functionally, key component of the proton channel; it plays a direct role in the translocation of protons across the membrane. The chain is ATP synthase subunit a from Shewanella piezotolerans (strain WP3 / JCM 13877).